The chain runs to 201 residues: Probable molybdenum cofactor guanylyltransferase (201 aa).

GTP is bound by residues 20–22 (LAG), Lys-32, Asp-77, and Asp-106. Asp-106 is a Mg(2+) binding site.

The protein belongs to the MobA family. The cofactor is Mg(2+).

The protein localises to the cytoplasm. It carries out the reaction Mo-molybdopterin + GTP + H(+) = Mo-molybdopterin guanine dinucleotide + diphosphate. Transfers a GMP moiety from GTP to Mo-molybdopterin (Mo-MPT) cofactor (Moco or molybdenum cofactor) to form Mo-molybdopterin guanine dinucleotide (Mo-MGD) cofactor. This is Probable molybdenum cofactor guanylyltransferase from Aquifex aeolicus (strain VF5).